Consider the following 208-residue polypeptide: MSKMAEQKAAAVDGLGGAGAADAAPAGEAAAARVRPVETLLRAAPLGLCVAAMTVMLRDQQSNEYGTVAYSDLGGFKYLVYANGLCAAYSLVSAFYTAVPRPATVSRSWVVFLLDQVFTYLILAAGAAAAELLYLAYNGDKEVTWSEACGVFGSFCRQARTSVAITFGTVLCFILLSLISSYRLFSAYEAPPSSALGSKGVEIAAYPR.

At 1–36 (MSKMAEQKAAAVDGLGGAGAADAAPAGEAAAARVRP) the chain is on the cytoplasmic side. A helical membrane pass occupies residues 37–57 (VETLLRAAPLGLCVAAMTVML). Residues 58 to 78 (RDQQSNEYGTVAYSDLGGFKY) lie on the Extracellular side of the membrane. A helical membrane pass occupies residues 79 to 99 (LVYANGLCAAYSLVSAFYTAV). Topologically, residues 100-108 (PRPATVSRS) are cytoplasmic. The helical transmembrane segment at 109 to 129 (WVVFLLDQVFTYLILAAGAAA) threads the bilayer. Topologically, residues 130–161 (AELLYLAYNGDKEVTWSEACGVFGSFCRQART) are extracellular. The chain crosses the membrane as a helical span at residues 162–182 (SVAITFGTVLCFILLSLISSY). Residues 183 to 208 (RLFSAYEAPPSSALGSKGVEIAAYPR) lie on the Cytoplasmic side of the membrane.

Belongs to the Casparian strip membrane proteins (CASP) family. As to quaternary structure, homodimer and heterodimers.

Its subcellular location is the cell membrane. In Sorghum bicolor (Sorghum), this protein is CASP-like protein 2A1.